A 156-amino-acid polypeptide reads, in one-letter code: SsrA-binding protein (156 aa).

The protein belongs to the SmpB family.

The protein localises to the cytoplasm. Its function is as follows. Required for rescue of stalled ribosomes mediated by trans-translation. Binds to transfer-messenger RNA (tmRNA), required for stable association of tmRNA with ribosomes. tmRNA and SmpB together mimic tRNA shape, replacing the anticodon stem-loop with SmpB. tmRNA is encoded by the ssrA gene; the 2 termini fold to resemble tRNA(Ala) and it encodes a 'tag peptide', a short internal open reading frame. During trans-translation Ala-aminoacylated tmRNA acts like a tRNA, entering the A-site of stalled ribosomes, displacing the stalled mRNA. The ribosome then switches to translate the ORF on the tmRNA; the nascent peptide is terminated with the 'tag peptide' encoded by the tmRNA and targeted for degradation. The ribosome is freed to recommence translation, which seems to be the essential function of trans-translation. This chain is SsrA-binding protein, found in Desulfitobacterium hafniense (strain DSM 10664 / DCB-2).